The primary structure comprises 2134 residues: Genome polyprotein (2134 aa).

Residues 1-1377 (MSKLFSTVGK…WLFEKIKTSK (1377 aa)) lie on the Cytoplasmic side of the membrane. The LRAT domain occupies 781–882 (IVSCSGEKAK…GDYGTKEGEK (102 aa)). Residues His791 and His802 contribute to the active site. Cys863 acts as the Acyl-thioester intermediate in catalysis. Positions 1127-1289 (LNKLGRLDKP…EEFSTHAMLD (163 aa)) constitute an SF3 helicase domain. 1153-1160 (GNRGGGKS) lines the ATP pocket. The stretch at 1378–1392 (WYILGCVGAVLSVSV) is an intramembrane region. Residues 1393–2134 (LGVFAYHMIK…VKYRFIDDSF (742 aa)) are Cytoplasmic-facing. Tyr1415 bears the O-(5'-phospho-RNA)-tyrosine mark. Positions 1431–1643 (DAQSVVDISN…ITKEMIEEML (213 aa)) constitute a Peptidase C3 domain. Catalysis depends on for protease 3C activity residues His1477, Asp1515, and Cys1603. In terms of domain architecture, RdRp catalytic spans 1880–2001 (DLVVGLDFSN…CIKKEYLDQK (122 aa)).

It belongs to the picornaviridae polyprotein family. Specific enzymatic cleavages by the viral protease in vivo yield a variety of precursors and mature proteins. During virion maturation, non-infectious particles are rendered infectious following cleavage of VP0. This maturation cleavage is followed by a conformational change of the particle. In terms of processing, VPg is uridylylated by the polymerase and is covalently linked to the 5'-end of genomic RNA. This uridylylated form acts as a nucleotide-peptide primer for the polymerase.

The protein localises to the virion. It localises to the host cytoplasm. It is found in the host cytoplasmic vesicle membrane. The catalysed reaction is RNA(n) + a ribonucleoside 5'-triphosphate = RNA(n+1) + diphosphate. It catalyses the reaction a ribonucleoside 5'-triphosphate + H2O = a ribonucleoside 5'-diphosphate + phosphate + H(+). It carries out the reaction Selective cleavage of Gln-|-Gly bond in the poliovirus polyprotein. In other picornavirus reactions Glu may be substituted for Gln, and Ser or Thr for Gly.. Functionally, capsid proteins VP1, VP2, and VP3 form a closed capsid enclosing the viral positive strand RNA genome. All these proteins contain a beta-sheet structure called beta-barrel jelly roll. Together they form an icosahedral capsid (T=3) composed of 60 copies of each VP1, VP2, and VP3, with a diameter of approximately 300 Angstroms. VP1 is situated at the 12 fivefold axes, whereas VP2 and VP3 are located at the quasi-sixfold axes. VP0 precursor is a component of immature procapsids. The N-terminal domain of VP0, protein VP4, is needed for the assembly of 12 pentamers into the icosahedral structure. Unlike other picornaviruses, AEV VP4 may not be myristoylated. Its function is as follows. Protein 2B and 2BC precursor affect membrane integrity and cause an increase in membrane permeability. In terms of biological role, associates with and induces structural rearrangements of intracellular membranes. It displays RNA-binding, nucleotide binding and NTPase activities. Functionally, protein 3A, via its hydrophobic domain, serves as membrane anchor. Protein 3B is covalently linked to the 5'-end of both the positive-strand and negative-strand genomic RNAs. It acts as a genome-linked replication primer. Its function is as follows. Cysteine protease that generates mature viral proteins from the precursor polyprotein. In addition to its proteolytic activity, it binds to viral RNA, and thus influences viral genome replication. RNA and substrate bind cooperatively to the protease. In terms of biological role, RNA-directed RNA polymerase 3D-POL replicates genomic and antigenomic RNA by recognizing replications specific signals. This chain is Genome polyprotein, found in Avian encephalomyelitis virus (strain Calnek vaccine) (AEV).